The chain runs to 292 residues: CCR4-NOT transcription complex subunit 8 (292 aa).

A divalent metal cation-binding residues include aspartate 40, glutamate 42, aspartate 161, and aspartate 230.

It belongs to the CAF1 family. Component of the CCR4-NOT complex; distinct complexes seem to exist that differ in the participation of probably mutually exclusive catalytic subunits; the complex contains two deadenylase subunits, CNOT6 or CNOT6L, and CNOT7 or CNOT8. In the complex interacts directly with CNOT1. Interacts with BTG1, BTG2 and TOB1. Interacts with BTG4.

It is found in the cytoplasm. Its subcellular location is the nucleus. It catalyses the reaction Exonucleolytic cleavage of poly(A) to 5'-AMP.. In terms of biological role, has 3'-5' poly(A) exoribonuclease activity for synthetic poly(A) RNA substrate. Its function seems to be partially redundant with that of CNOT7. Catalytic component of the CCR4-NOT complex which is linked to various cellular processes including bulk mRNA degradation, miRNA-mediated repression, translational repression during translational initiation and general transcription regulation. During miRNA-mediated repression the complex also seems to act as translational repressor during translational initiation. Additional complex functions may be a consequence of its influence on mRNA expression. Associates with members of the BTG family such as TOB1 and BTG2 and is required for their anti-proliferative activity. The sequence is that of CCR4-NOT transcription complex subunit 8 (Cnot8) from Mus musculus (Mouse).